The sequence spans 148 residues: Lysozyme C-1 (148 aa).

The signal sequence occupies residues 1–18 (MKALLTLGLLLLSVTAQA). One can recognise a C-type lysozyme domain in the interval 19–148 (KVYNRCELAR…LSQYIRNCGV (130 aa)). Disulfide bonds link C24–C146, C48–C134, C83–C99, and C95–C113. Residues E53 and D71 contribute to the active site.

It belongs to the glycosyl hydrolase 22 family. Monomer. As to expression, expressed strongly only in small intestine.

It is found in the secreted. The enzyme catalyses Hydrolysis of (1-&gt;4)-beta-linkages between N-acetylmuramic acid and N-acetyl-D-glucosamine residues in a peptidoglycan and between N-acetyl-D-glucosamine residues in chitodextrins.. Its function is as follows. Lysozymes have primarily a bacteriolytic function; those in tissues and body fluids are associated with the monocyte-macrophage system and enhance the activity of immunoagents. Lyz1 is active against a range of Gram-positive and Gram-negative bacteria. Less effective than Lyz2 in killing Gram-negative bacteria. Lyz1 and Lyz2 are equally effective in killing Gram-positive bacteria. The polypeptide is Lysozyme C-1 (Lyz1) (Mus musculus (Mouse)).